A 203-amino-acid polypeptide reads, in one-letter code: Pyridoxine/pyridoxamine 5'-phosphate oxidase (203 aa).

FMN-binding positions include R50–K55, Y65–T66, K72, and Q94. K55 contacts substrate. 3 residues coordinate substrate: Y112, R116, and S120. Residues Q129–S130 and W174 each bind FMN. R180–H182 provides a ligand contact to substrate. Residue R184 coordinates FMN.

The protein belongs to the pyridoxamine 5'-phosphate oxidase family. In terms of assembly, homodimer. It depends on FMN as a cofactor.

It catalyses the reaction pyridoxamine 5'-phosphate + O2 + H2O = pyridoxal 5'-phosphate + H2O2 + NH4(+). The catalysed reaction is pyridoxine 5'-phosphate + O2 = pyridoxal 5'-phosphate + H2O2. It functions in the pathway cofactor metabolism; pyridoxal 5'-phosphate salvage; pyridoxal 5'-phosphate from pyridoxamine 5'-phosphate: step 1/1. Its pathway is cofactor metabolism; pyridoxal 5'-phosphate salvage; pyridoxal 5'-phosphate from pyridoxine 5'-phosphate: step 1/1. Functionally, catalyzes the oxidation of either pyridoxine 5'-phosphate (PNP) or pyridoxamine 5'-phosphate (PMP) into pyridoxal 5'-phosphate (PLP). The chain is Pyridoxine/pyridoxamine 5'-phosphate oxidase from Brucella anthropi (strain ATCC 49188 / DSM 6882 / CCUG 24695 / JCM 21032 / LMG 3331 / NBRC 15819 / NCTC 12168 / Alc 37) (Ochrobactrum anthropi).